A 196-amino-acid polypeptide reads, in one-letter code: MQAVKCVIVGDGAVGKTCLLISYTTNAFPNEYIPTVFDNYSATVMVDSKPINLGLWDTAGQEDYDRLRPLSYPQTDVFLICFSVVSPPSFDNVSSKWQPEVSHHCPKTPCLLVGTKLDMREDKEQLKRLEEKKITPITTEQGEAKCKDIGAVKYIECSALTQKNLRLVFDEAVRAVISPAGGAKKDKKNNRGCLLF.

11 residues coordinate GTP: Ala13, Gly15, Lys16, Thr17, Cys18, Tyr32, Thr35, Gly60, Lys116, Asp118, and Ala159. A Mg(2+)-binding site is contributed by Thr17. 2 short sequence motifs (switch) span residues 26–37 (NAFPNEYIPTVF) and 57–75 (DTAG…YPQT). A Mg(2+)-binding site is contributed by Thr35. Cysteine methyl ester is present on Cys193. Cys193 carries the S-geranylgeranyl cysteine lipid modification. The propeptide at 194–196 (LLF) is removed in mature form.

It belongs to the small GTPase superfamily. Rho family. Interacts (GTP-bound form) with PAK2 (via CRIB domain). Requires Mg(2+) as cofactor.

The protein localises to the cell membrane. It localises to the cytoplasm. The protein resides in the cytoskeleton. The enzyme catalyses GTP + H2O = GDP + phosphate + H(+). With respect to regulation, regulated by guanine nucleotide exchange factors (GEFs) which promote the exchange of bound GDP for free GTP, GTPase activating proteins (GAPs) which increase the GTP hydrolysis activity, and GDP dissociation inhibitors which inhibit the dissociation of the nucleotide from the GTPase. In terms of biological role, small GTPase which cycles between active GTP-bound and inactive GDP-bound states. Involved in cytoskeleton remodeling. Plays a role in phagocytosis of bacteria and host erythrocytes. Involved in capping of surface receptors. May be involved in cytokinesis. This Entamoeba histolytica (strain ATCC 30459 / HM-1:IMSS / ABRM) protein is Rho-related protein racA.